Reading from the N-terminus, the 668-residue chain is DNA ligase (668 aa).

NAD(+) is bound by residues 37–41 (DAVYD), 86–87 (SM), and E116. The active-site N6-AMP-lysine intermediate is the K118. NAD(+)-binding residues include R139, E173, K288, and K312. Positions 406, 409, 424, and 429 each coordinate Zn(2+). Residues 590-668 (APDNFFKEKT…EQEAIAKIEK (79 aa)) form the BRCT domain.

Belongs to the NAD-dependent DNA ligase family. LigA subfamily. It depends on Mg(2+) as a cofactor. Mn(2+) is required as a cofactor.

It carries out the reaction NAD(+) + (deoxyribonucleotide)n-3'-hydroxyl + 5'-phospho-(deoxyribonucleotide)m = (deoxyribonucleotide)n+m + AMP + beta-nicotinamide D-nucleotide.. DNA ligase that catalyzes the formation of phosphodiester linkages between 5'-phosphoryl and 3'-hydroxyl groups in double-stranded DNA using NAD as a coenzyme and as the energy source for the reaction. It is essential for DNA replication and repair of damaged DNA. This Lactobacillus gasseri (strain ATCC 33323 / DSM 20243 / BCRC 14619 / CIP 102991 / JCM 1131 / KCTC 3163 / NCIMB 11718 / NCTC 13722 / AM63) protein is DNA ligase.